Consider the following 311-residue polypeptide: Coproporphyrin III ferrochelatase (311 aa).

Residues Tyr12, Arg29, 45 to 46, Ser53, and Tyr124 each bind Fe-coproporphyrin III; that span reads RY. His182 and Glu263 together coordinate Fe(2+).

The protein belongs to the ferrochelatase family.

It is found in the cytoplasm. The catalysed reaction is Fe-coproporphyrin III + 2 H(+) = coproporphyrin III + Fe(2+). It functions in the pathway porphyrin-containing compound metabolism; protoheme biosynthesis. Functionally, involved in coproporphyrin-dependent heme b biosynthesis. Catalyzes the insertion of ferrous iron into coproporphyrin III to form Fe-coproporphyrin III. This chain is Coproporphyrin III ferrochelatase, found in Bacillus mycoides (strain KBAB4) (Bacillus weihenstephanensis).